The sequence spans 223 residues: AN1-type zinc finger protein 6 (223 aa).

The A20-type zinc-finger motif lies at 8-42; it reads SQAPMLCSTGCGFYGNPRTNGMCSVCYKEHLQRQN. Cysteine 14, cysteine 18, cysteine 30, and cysteine 33 together coordinate Zn(2+). Residues 41–155 form a disordered region; it reads QNSSNGRISP…PSEEQSKSLE (115 aa). Serine 49 carries the post-translational modification Phosphoserine. 2 stretches are compositionally biased toward polar residues: residues 77–110 and 137–148; these read ALDS…STSV and SSVSDTTQQPSE. Residues 158 to 204 form an AN1-type zinc finger; it reads KQKKNRCFMCRKKVGLTGFECRCGNVYCGVHRYSDVHNCSYNYKADA. Zn(2+) is bound by residues cysteine 164, cysteine 167, cysteine 178, cysteine 180, cysteine 185, histidine 188, histidine 194, and cysteine 196. An N6-acetyllysine modification is found at lysine 219.

As to quaternary structure, interacts with PKN1. Interacts with TRAF2. Interacts with mono- and polyubiquitin. Interacts with PEX6. Interacts with PEX5 (Cys-linked ubiquitinated).

The protein resides in the cytoplasm. Involved in regulation of TNF-alpha induced NF-kappa-B activation and apoptosis. Involved in modulation of 'Lys-48'-linked polyubiquitination status of TRAF2 and decreases association of TRAF2 with RIPK1. Required for PTS1 target sequence-dependent protein import into peroxisomes and PEX5 stability; may cooperate with PEX6. In vitro involved in PEX5 export from the cytosol to peroxisomes. The protein is AN1-type zinc finger protein 6 (Zfand6) of Mus musculus (Mouse).